A 735-amino-acid chain; its full sequence is Capsid protein (735 aa).

Disordered stretches follow at residues 577-604 and 632-695; these read VVRN…DPKY and QQAS…TVEQ. A compositionally biased stretch (basic and acidic residues) spans 649–666; sequence EIKGLTEADQEAEKDSGL. Residues 676–685 show a composition bias toward low complexity; it reads SSQETQSEQE.

The protein belongs to the anelloviridae capsid protein family.

It is found in the virion. Functionally, self assemble to form an icosahedral capsid. This chain is Capsid protein, found in Pan troglodytes (Chimpanzee).